Reading from the N-terminus, the 96-residue chain is Co-chaperonin GroES (96 aa).

Belongs to the GroES chaperonin family. Heptamer of 7 subunits arranged in a ring. Interacts with the chaperonin GroEL.

Its subcellular location is the cytoplasm. In terms of biological role, together with the chaperonin GroEL, plays an essential role in assisting protein folding. The GroEL-GroES system forms a nano-cage that allows encapsulation of the non-native substrate proteins and provides a physical environment optimized to promote and accelerate protein folding. GroES binds to the apical surface of the GroEL ring, thereby capping the opening of the GroEL channel. The polypeptide is Co-chaperonin GroES (Polaromonas naphthalenivorans (strain CJ2)).